Consider the following 424-residue polypeptide: UPF0229 protein PC1_1960 (424 aa).

Positions 46–109 (IESGESVSIP…GQGDASKDGE (64 aa)) are disordered. Residues 77–90 (PGNDHFVQNDKIER) are compositionally biased toward basic and acidic residues. Gly residues predominate over residues 92 to 101 (QGGGGGGSGQ).

Belongs to the UPF0229 family.

This chain is UPF0229 protein PC1_1960, found in Pectobacterium carotovorum subsp. carotovorum (strain PC1).